The following is a 335-amino-acid chain: Tryptophan--tRNA ligase (335 aa).

ATP-binding positions include 19–21 and 28–29; these read QPS and GN. Positions 20-29 match the 'HIGH' region motif; that stretch reads PSSGMLHLGN. An L-tryptophan-binding site is contributed by aspartate 143. ATP-binding positions include 155 to 157, isoleucine 192, and 201 to 205; these read GAD and KMSKS. The short motif at 201-205 is the 'KMSKS' region element; sequence KMSKS.

Belongs to the class-I aminoacyl-tRNA synthetase family. In terms of assembly, homodimer.

It is found in the cytoplasm. It carries out the reaction tRNA(Trp) + L-tryptophan + ATP = L-tryptophyl-tRNA(Trp) + AMP + diphosphate + H(+). Its function is as follows. Catalyzes the attachment of tryptophan to tRNA(Trp). This is Tryptophan--tRNA ligase from Tropheryma whipplei (strain Twist) (Whipple's bacillus).